Reading from the N-terminus, the 344-residue chain is 4-hydroxy-3-methylbut-2-en-1-yl diphosphate synthase (flavodoxin) (344 aa).

4 residues coordinate [4Fe-4S] cluster: cysteine 253, cysteine 256, cysteine 288, and glutamate 295.

The protein belongs to the IspG family. [4Fe-4S] cluster serves as cofactor.

The enzyme catalyses (2E)-4-hydroxy-3-methylbut-2-enyl diphosphate + oxidized [flavodoxin] + H2O + 2 H(+) = 2-C-methyl-D-erythritol 2,4-cyclic diphosphate + reduced [flavodoxin]. It participates in isoprenoid biosynthesis; isopentenyl diphosphate biosynthesis via DXP pathway; isopentenyl diphosphate from 1-deoxy-D-xylulose 5-phosphate: step 5/6. Functionally, converts 2C-methyl-D-erythritol 2,4-cyclodiphosphate (ME-2,4cPP) into 1-hydroxy-2-methyl-2-(E)-butenyl 4-diphosphate. The sequence is that of 4-hydroxy-3-methylbut-2-en-1-yl diphosphate synthase (flavodoxin) from Thermotoga petrophila (strain ATCC BAA-488 / DSM 13995 / JCM 10881 / RKU-1).